The primary structure comprises 257 residues: Probable transcriptional regulatory protein SRU_2667 (257 aa).

Basic residues predominate over residues 1–15 (MAGHTRKWAKVKRKK). The segment at 1 to 25 (MAGHTRKWAKVKRKKQKDDRRKSKV) is disordered.

This sequence belongs to the TACO1 family.

Its subcellular location is the cytoplasm. The protein is Probable transcriptional regulatory protein SRU_2667 of Salinibacter ruber (strain DSM 13855 / M31).